The following is a 168-amino-acid chain: Probable chorismate pyruvate-lyase (168 aa).

Substrate is bound by residues Arg75, Ile114, and Glu155.

It belongs to the UbiC family.

It localises to the cytoplasm. It carries out the reaction chorismate = 4-hydroxybenzoate + pyruvate. It participates in cofactor biosynthesis; ubiquinone biosynthesis. Functionally, removes the pyruvyl group from chorismate, with concomitant aromatization of the ring, to provide 4-hydroxybenzoate (4HB) for the ubiquinone pathway. The polypeptide is Probable chorismate pyruvate-lyase (Psychrobacter cryohalolentis (strain ATCC BAA-1226 / DSM 17306 / VKM B-2378 / K5)).